A 143-amino-acid polypeptide reads, in one-letter code: AP-2 complex subunit sigma (143 aa).

Belongs to the adaptor complexes small subunit family. As to quaternary structure, adaptor protein complex 2 (AP-2) is a heterotetramer composed of two large adaptins (alpha-type subunit apl3 and beta-type subunit apl1), a medium chain (mu-type subunit apm4) and a small adaptin (sigma-type subunit aps2).

The protein localises to the cell membrane. Its subcellular location is the membrane. It is found in the coated pit. Component of the adaptor complexes which link clathrin to receptors in coated vesicles. Clathrin-associated protein complexes are believed to interact with the cytoplasmic tails of membrane proteins, leading to their selection and concentration. This is AP-2 complex subunit sigma (aps2) from Schizosaccharomyces pombe (strain 972 / ATCC 24843) (Fission yeast).